Here is a 68-residue protein sequence, read N- to C-terminus: MKAVKMKEIREMSREEKLRKLRELELELLKLRTLVRSGGAVENPGRINLIRKDIARLKMALCEEGYRV.

This sequence belongs to the universal ribosomal protein uL29 family.

In Archaeoglobus fulgidus (strain ATCC 49558 / DSM 4304 / JCM 9628 / NBRC 100126 / VC-16), this protein is Large ribosomal subunit protein uL29 (rpl29).